The chain runs to 613 residues: DNA repair and telomere maintenance protein nbs1 (613 aa).

One can recognise an FHA domain in the interval tyrosine 23 to valine 86. 2 consecutive BRCT domains span residues phenylalanine 107–threonine 186 and glycine 228–isoleucine 302. Serine 355 carries the post-translational modification Phosphoserine. 2 disordered regions span residues lysine 381–lysine 428 and threonine 546–phenylalanine 613. Over residues leucine 387–lysine 399 the composition is skewed to polar residues. Positions lysine 400–lysine 409 are enriched in basic and acidic residues. The segment covering serine 574–lysine 592 has biased composition (low complexity). Positions phenylalanine 611–phenylalanine 613 match the FxF/Y motif motif.

The protein belongs to the Nibrin family. As to quaternary structure, component of the MRN complex composed of two heterodimers rad32 and rad50 associated with a single nbs1. Interacts with (phosphorylated) ctp1/CtIP. Interacts (via FxF/Y motif) with tel1/atm.

It is found in the nucleus. It localises to the chromosome. The protein localises to the telomere. In terms of biological role, component of the MRN complex, which plays a central role in double-strand break (DSB) repair, DNA recombination, maintenance of telomere integrity and meiosis. The MRN complex is involved in the repair of DNA double-strand breaks (DSBs) via homologous recombination (HR), an error-free mechanism which primarily occurs during S and G2 phases. The complex (1) mediates the end resection of damaged DNA, which generates proper single-stranded DNA, a key initial steps in HR, and is (2) required for the recruitment of other repair factors and efficient activation of tel1/atm upon DNA damage. The MRN complex possesses single-strand endonuclease activity and double-strand-specific 3'-5' exonuclease activity, which are provided by MRE11, to initiate end resection, which is required for single-strand invasion and recombination. Within the MRN complex, nbs1 acts as a protein-protein adapter, which specifically recognizes and binds phosphorylated proteins, promoting their recruitment to DNA damage sites. Recruits rad32 and rad50 components of the MRN complex to DSBs in response to DNA damage. Promotes the recruitment of tel1/atm to the DNA damage sites, activating tel1/atm function. Mediates the recruitment of phosphorylated ctp1/CtIP to DSBs, leading to cooperation between the MRN complex and ctp1/CtIP to initiate end resection. This chain is DNA repair and telomere maintenance protein nbs1, found in Schizosaccharomyces pombe (strain 972 / ATCC 24843) (Fission yeast).